Reading from the N-terminus, the 331-residue chain is tRNA-cytidine(32) 2-sulfurtransferase (331 aa).

The disordered stretch occupies residues 1 to 33; the sequence is MNAPHMNDTAADAATLDDAAAPAGRPALTRREQ. Residues 8 to 23 show a composition bias toward low complexity; it reads DTAADAATLDDAAAPA. A PP-loop motif motif is present at residues 71–76; sequence SGGKDS. [4Fe-4S] cluster contacts are provided by cysteine 146, cysteine 149, and cysteine 237.

This sequence belongs to the TtcA family. In terms of assembly, homodimer. Mg(2+) is required as a cofactor. It depends on [4Fe-4S] cluster as a cofactor.

Its subcellular location is the cytoplasm. It carries out the reaction cytidine(32) in tRNA + S-sulfanyl-L-cysteinyl-[cysteine desulfurase] + AH2 + ATP = 2-thiocytidine(32) in tRNA + L-cysteinyl-[cysteine desulfurase] + A + AMP + diphosphate + H(+). The protein operates within tRNA modification. Its function is as follows. Catalyzes the ATP-dependent 2-thiolation of cytidine in position 32 of tRNA, to form 2-thiocytidine (s(2)C32). The sulfur atoms are provided by the cysteine/cysteine desulfurase (IscS) system. The sequence is that of tRNA-cytidine(32) 2-sulfurtransferase from Burkholderia cenocepacia (strain HI2424).